Reading from the N-terminus, the 429-residue chain is Chordin-like protein 2 (429 aa).

Residues 1–25 (MVPEVRVLSSLLGLALLWFPLDSHA) form the signal peptide. 2 VWFC domains span residues 31–96 (MFCL…PKCV) and 109–175 (KSCQ…QACK). An N-linked (GlcNAc...) asparagine glycan is attached at Asn114. At Ser182 the chain carries Phosphoserine; by FAM20C. A disordered region spans residues 182–224 (SDEEDSVQSLHGVRHPQDPCSSDAGRKRGPGTPAPTGLSAPLS). Positions 250–315 (KACVHGGKTY…VAGKCCKICP (66 aa)) constitute a VWFC 3 domain.

In terms of assembly, interacts with GDF5. May interact with BMP2, BMP4, BMP5, BMP6, BMP7 and INHBA. In terms of processing, phosphorylated by FAM20C in the extracellular medium. In terms of tissue distribution, highly expressed in uterus. Moderately expressed in heart, liver, prostate, testis and ovary. Weakly expressed in skeletal muscle, kidney, spleen, small intestine and colon. Expressed in the secretory epithelial cells of uterine endometrium, fallopian tubes, endocervical glands, bladder and prostate, as well as the transitional epithelium of the urinary bladder, and in bone osteoblasts (at protein level). In normal cartilage, expression was confined in a few chondrocytes in the superficial zone as well as in the middle zone. In diseased cartilage coming from osteoarthritic patients, expression was limited to the middle zone of chondrocytes. Isoform 1 and isoform 2 are expressed in fetal cerebellum and heart, while only isoform 2 is detected in fetal spleen. Isoform 2 present in plasma.

It localises to the secreted. Its subcellular location is the cytoplasm. Its function is as follows. May inhibit BMPs activity by blocking their interaction with their receptors. Has a negative regulator effect on the cartilage formation/regeneration from immature mesenchymal cells, by preventing or reducing the rate of matrix accumulation. Implicated in tumor angiogenesis. May play a role during myoblast and osteoblast differentiation, and maturation. This Homo sapiens (Human) protein is Chordin-like protein 2 (CHRDL2).